The chain runs to 588 residues: Tetratricopeptide repeat protein 39B (588 aa).

TPR repeat units lie at residues 294–327, 485–518, and 526–559; these read SIIL…QQEW, CLVQ…EKRV, and PFTF…YKDY.

This sequence belongs to the TTC39 family.

Its function is as follows. May be involved in lipid metabolism. In Xenopus tropicalis (Western clawed frog), this protein is Tetratricopeptide repeat protein 39B (ttc39b).